A 156-amino-acid chain; its full sequence is Ribosomal RNA large subunit methyltransferase H (156 aa).

S-adenosyl-L-methionine contacts are provided by residues Leu73, Gly104, and 123-128 (LSPLTL).

Belongs to the RNA methyltransferase RlmH family. As to quaternary structure, homodimer.

It localises to the cytoplasm. It catalyses the reaction pseudouridine(1915) in 23S rRNA + S-adenosyl-L-methionine = N(3)-methylpseudouridine(1915) in 23S rRNA + S-adenosyl-L-homocysteine + H(+). Specifically methylates the pseudouridine at position 1915 (m3Psi1915) in 23S rRNA. In Serratia proteamaculans (strain 568), this protein is Ribosomal RNA large subunit methyltransferase H.